The chain runs to 252 residues: MSATELFARRATLARSVRLLSEFRFEQSDPARFYGALADDTAAMVADLWQAATETTPGGRTVLDVGGGPGFFAAAFARRGMEYVGVEPDPREMHAGPAAQAGGRYVRASGTSLPFADGSVDVCLSSNVAEHVPDPWRLGNEMVRVTRPGGLAVLSYTVWLGPFGGHEMGLTHYLGGARAADRYTRKHGHRPKNDYGSSLFAVSAHDGLEWAASTGALIAAFPRYHPRWAWWTNAVPGLREFVVSNQVLVLQP.

This sequence belongs to the methyltransferase superfamily.

This is an uncharacterized protein from Mycobacterium sp. (strain JLS).